A 171-amino-acid polypeptide reads, in one-letter code: Small ribosomal subunit protein uS13 (171 aa).

Residues 1 to 11 (MAKGSANNVKV) show a composition bias toward polar residues. 2 disordered regions span residues 1–24 (MAKG…EKKE) and 144–164 (EKGK…GLSI). Residues 144-158 (EKGKKVRGQRTRSNG) are compositionally biased toward basic residues.

The protein belongs to the universal ribosomal protein uS13 family. Part of the 30S ribosomal subunit. Forms a loose heterodimer with protein S19. Forms two bridges to the 50S subunit in the 70S ribosome.

In terms of biological role, located at the top of the head of the 30S subunit, it contacts several helices of the 16S rRNA. In the 70S ribosome it contacts the 23S rRNA (bridge B1a) and protein L5 of the 50S subunit (bridge B1b), connecting the 2 subunits; these bridges are implicated in subunit movement. The protein is Small ribosomal subunit protein uS13 of Thermoplasma acidophilum (strain ATCC 25905 / DSM 1728 / JCM 9062 / NBRC 15155 / AMRC-C165).